The sequence spans 163 residues: UPF0303 protein SAV_5210 (163 aa).

It belongs to the UPF0303 family.

In Streptomyces avermitilis (strain ATCC 31267 / DSM 46492 / JCM 5070 / NBRC 14893 / NCIMB 12804 / NRRL 8165 / MA-4680), this protein is UPF0303 protein SAV_5210.